Reading from the N-terminus, the 345-residue chain is Adenine deaminase (345 aa).

Residues His20, His22, and His204 each coordinate Zn(2+). The active-site Proton donor is Glu207. A Zn(2+)-binding site is contributed by Asp285. Residue Asp286 coordinates substrate.

Belongs to the metallo-dependent hydrolases superfamily. Adenosine and AMP deaminases family. Adenine deaminase type 2 subfamily. The cofactor is Zn(2+).

It catalyses the reaction adenine + H2O + H(+) = hypoxanthine + NH4(+). Its function is as follows. Catalyzes the hydrolytic deamination of adenine to hypoxanthine. Plays an important role in the purine salvage pathway and in nitrogen catabolism. The chain is Adenine deaminase from Ralstonia nicotianae (strain ATCC BAA-1114 / GMI1000) (Ralstonia solanacearum).